The primary structure comprises 458 residues: Light-independent protochlorophyllide reductase subunit N (458 aa).

[4Fe-4S] cluster-binding residues include Cys-20, Cys-45, and Cys-105.

The protein belongs to the BchN/ChlN family. Protochlorophyllide reductase is composed of three subunits; ChlL, ChlN and ChlB. Forms a heterotetramer of two ChlB and two ChlN subunits. The cofactor is [4Fe-4S] cluster.

It is found in the plastid. The protein localises to the chloroplast. The catalysed reaction is chlorophyllide a + oxidized 2[4Fe-4S]-[ferredoxin] + 2 ADP + 2 phosphate = protochlorophyllide a + reduced 2[4Fe-4S]-[ferredoxin] + 2 ATP + 2 H2O. Its pathway is porphyrin-containing compound metabolism; chlorophyll biosynthesis (light-independent). Functionally, component of the dark-operative protochlorophyllide reductase (DPOR) that uses Mg-ATP and reduced ferredoxin to reduce ring D of protochlorophyllide (Pchlide) to form chlorophyllide a (Chlide). This reaction is light-independent. The NB-protein (ChlN-ChlB) is the catalytic component of the complex. This Angiopteris evecta (Mule's foot fern) protein is Light-independent protochlorophyllide reductase subunit N.